The sequence spans 449 residues: C4-dicarboxylate transport protein (449 aa).

8 helical membrane-spanning segments follow: residues 18–38, 61–81, 93–113, 159–179, 202–222, 244–264, 311–331, and 369–389; these read PFYL…ALLG, MIIS…VAHV, VYFL…AHVV, FVGD…IALA, LVQM…AFTI, SLLF…FSIL, GYSF…LFIA, and AATL…ILGV.

The protein belongs to the dicarboxylate/amino acid:cation symporter (DAACS) (TC 2.A.23) family.

The protein resides in the cell inner membrane. In terms of biological role, responsible for the transport of dicarboxylates such as succinate, fumarate, and malate from the periplasm across the membrane. The chain is C4-dicarboxylate transport protein from Xylella fastidiosa (strain M12).